A 416-amino-acid polypeptide reads, in one-letter code: Lysosome-associated membrane glycoprotein 3 (416 aa).

The signal sequence occupies residues Met-1–Ala-27. Over Lys-28–Thr-381 the chain is Lumenal. 7 N-linked (GlcNAc...) asparagine glycosylation sites follow: Asn-112, Asn-158, Asn-164, Asn-200, Asn-232, Asn-266, and Asn-291. Disordered stretches follow at residues Pro-136–Thr-167 and Ser-179–Gln-219. Low complexity predominate over residues His-143 to Thr-160. Positions Pro-188 to Ala-208 are enriched in low complexity. Cysteines 237 and 274 form a disulfide. A disulfide bridge links Cys-339 with Cys-376. Residues Ile-382–Tyr-402 traverse the membrane as a helical segment. The Cytoplasmic segment spans residues Lys-403–Ile-416.

This sequence belongs to the LAMP family. Monomer. Interacts with FURIN. In terms of assembly, (Microbial infection) Interacts with mumps virus protein F; this interaction promotes protein F cleavage by FURIN. Detected in tonsil interdigitating dendritic cells, in spleen, lymph node, Peyer's patches in the small instestine, in thymus medulla and in B-cells (at protein level). Expressed in lymphoid organs and dendritic cells. Expressed in lung. Up-regulated in carcinomas of the esophagus, colon, rectum, ureter, stomach, breast, fallopian tube, thyroid and parotid tissues.

It localises to the cell surface. The protein localises to the lysosome membrane. It is found in the cytoplasmic vesicle membrane. Its subcellular location is the early endosome membrane. In terms of biological role, lysosomal membrane glycoprotein which plays a role in the unfolded protein response (UPR) that contributes to protein degradation and cell survival during proteasomal dysfunction. Plays a role in the process of fusion of the lysosome with the autophagosome, thereby modulating the autophagic process. Promotes hepatocellular lipogenesis through activation of the PI3K/Akt pathway. May also play a role in dendritic cell function and in adaptive immunity. (Microbial infection) Plays a positive role in post-entry steps of influenza A virus replication, either virus uncoating, cytosolic transport, or nuclear import of viral components, and promotes nuclear accumulation of influenza nucleoprotein/NP at early stages of viral infection. Its function is as follows. (Microbial infection) Supports the FURIN-mediated cleavage of mumps virus fusion protein F by interacting with both FURIN and the unprocessed form but not the processed form of the viral protein F. Functionally, (Microbial infection) Promotes the intracellular proliferation of Salmonella typhimuium. The protein is Lysosome-associated membrane glycoprotein 3 (LAMP3) of Homo sapiens (Human).